The following is a 339-amino-acid chain: Phosphoribosylformylglycinamidine cyclo-ligase (339 aa).

This sequence belongs to the AIR synthase family.

The protein resides in the cytoplasm. It carries out the reaction 2-formamido-N(1)-(5-O-phospho-beta-D-ribosyl)acetamidine + ATP = 5-amino-1-(5-phospho-beta-D-ribosyl)imidazole + ADP + phosphate + H(+). It participates in purine metabolism; IMP biosynthesis via de novo pathway; 5-amino-1-(5-phospho-D-ribosyl)imidazole from N(2)-formyl-N(1)-(5-phospho-D-ribosyl)glycinamide: step 2/2. The polypeptide is Phosphoribosylformylglycinamidine cyclo-ligase (Streptococcus thermophilus (strain ATCC BAA-250 / LMG 18311)).